A 216-amino-acid chain; its full sequence is PEP-dependent dihydroxyacetone kinase 2, ADP-binding subunit DhaL (216 aa).

In terms of domain architecture, DhaL spans 9-210 (AFFGHVLQDM…SWMLMNVILE (202 aa)). Mg(2+) contacts are provided by D33, D38, and D40. ADP-binding positions include 41-44 (HGIN), 84-85 (AS), G126, M135, R182, and 195-197 (DPG).

In terms of assembly, homodimer. The dihydroxyacetone kinase complex is composed of a homodimer of DhaM, a homodimer of DhaK and the subunit DhaL. It depends on Mg(2+) as a cofactor.

It is found in the cytoplasm. It catalyses the reaction dihydroxyacetone + phosphoenolpyruvate = dihydroxyacetone phosphate + pyruvate. Its pathway is polyol metabolism; glycerol degradation. ADP-binding subunit of the dihydroxyacetone kinase, which is responsible for the phosphoenolpyruvate (PEP)-dependent phosphorylation of dihydroxyacetone. DhaL-ADP is converted to DhaL-ATP via a phosphoryl group transfer from DhaM and transmits it to dihydroxyacetone binds to DhaK. The sequence is that of PEP-dependent dihydroxyacetone kinase 2, ADP-binding subunit DhaL from Listeria innocua serovar 6a (strain ATCC BAA-680 / CLIP 11262).